We begin with the raw amino-acid sequence, 143 residues long: HTH-type transcriptional regulator CueR (143 aa).

The HTH merR-type domain maps to 11 to 79 (TYRISELAAL…LSDIKDRLEN (69 aa)). The segment at residues 14–33 (ISELAALAGVTKRTVDYYTN) is a DNA-binding region (H-T-H motif).

Functionally, transcriptional activator of the copZA operon. In Bacillus subtilis (strain 168), this protein is HTH-type transcriptional regulator CueR (cueR).